The following is a 208-amino-acid chain: Small ribosomal subunit protein uS4 (208 aa).

The region spanning 95–155 (TRLDALVLRA…AKSQTMVPFQ (61 aa)) is the S4 RNA-binding domain.

Belongs to the universal ribosomal protein uS4 family. As to quaternary structure, part of the 30S ribosomal subunit. Contacts protein S5. The interaction surface between S4 and S5 is involved in control of translational fidelity.

Its function is as follows. One of the primary rRNA binding proteins, it binds directly to 16S rRNA where it nucleates assembly of the body of the 30S subunit. Functionally, with S5 and S12 plays an important role in translational accuracy. The polypeptide is Small ribosomal subunit protein uS4 (Bifidobacterium adolescentis (strain ATCC 15703 / DSM 20083 / NCTC 11814 / E194a)).